A 306-amino-acid polypeptide reads, in one-letter code: BRCA2 and CDKN1A-interacting protein (306 aa).

The segment covering 1-10 has biased composition (basic residues); it reads MASRPKRRAV. The disordered stretch occupies residues 1-45; it reads MASRPKRRAVSRVPPALGDEEEEDEVEEQDEDDSDEEEDEEDEVV. The segment covering 18–45 has biased composition (acidic residues); sequence GDEEEEDEVEEQDEDDSDEEEDEEDEVV. S34 and S104 each carry phosphoserine. An interaction with BRCA2 region spans residues 51–159; the sequence is IEFEAYSISD…EKSMVEQLDR (109 aa). The interaction with CDKN1A stretch occupies residues 153 to 251; sequence MVEQLDRLFN…NAEEEFFYEK (99 aa). Phosphoserine is present on S273.

Belongs to the BCP1 family. Interacts with BRCA2, CDKN1A and MTDH/LYRIC. Interacts with DCTN1/p150-glued and ACTR1A/ARP1. Interacts with alpha-, beta- and gamma-tubulins. Interacts with TENT5C; the interaction has no effect on TENT5C poly(A) polymerase function.

The protein resides in the nucleus. Its subcellular location is the cytoplasm. It is found in the cytoskeleton. The protein localises to the microtubule organizing center. It localises to the centrosome. The protein resides in the centriole. Its subcellular location is the spindle pole. During interphase, required for microtubule organizing and anchoring activities. During mitosis, required for the organization and stabilization of the spindle pole. May promote cell cycle arrest by enhancing the inhibition of CDK2 activity by CDKN1A. May be required for repair of DNA damage by homologous recombination in conjunction with BRCA2. May not be involved in non-homologous end joining (NHEJ). The chain is BRCA2 and CDKN1A-interacting protein (BCCIP) from Bos taurus (Bovine).